A 299-amino-acid chain; its full sequence is Recombination-associated protein RdgC (299 aa).

Belongs to the RdgC family.

It is found in the cytoplasm. Its subcellular location is the nucleoid. Functionally, may be involved in recombination. In Neisseria meningitidis serogroup B (strain ATCC BAA-335 / MC58), this protein is Recombination-associated protein RdgC.